We begin with the raw amino-acid sequence, 238 residues long: Orotidine 5'-phosphate decarboxylase (238 aa).

Residues D10, K32, 59-68, T122, R184, Q193, G213, and R214 each bind substrate; that span reads DLKLHDIPNT. Residue K61 is the Proton donor of the active site.

The protein belongs to the OMP decarboxylase family. Type 1 subfamily. Homodimer.

The enzyme catalyses orotidine 5'-phosphate + H(+) = UMP + CO2. The protein operates within pyrimidine metabolism; UMP biosynthesis via de novo pathway; UMP from orotate: step 2/2. Its function is as follows. Catalyzes the decarboxylation of orotidine 5'-monophosphate (OMP) to uridine 5'-monophosphate (UMP). This is Orotidine 5'-phosphate decarboxylase from Bacillus thuringiensis subsp. konkukian (strain 97-27).